Reading from the N-terminus, the 329-residue chain is 2-oxoglutarate-dependent dioxygenase mpl2 (329 aa).

The Fe2OG dioxygenase domain occupies 183 to 288 (PACPLRLLHY…RYSVVFFFDG (106 aa)). The Fe cation site is built by histidine 211, aspartate 213, and histidine 269. Arginine 279 serves as a coordination point for 2-oxoglutarate.

It belongs to the iron/ascorbate-dependent oxidoreductase family. Requires Fe(2+) as cofactor.

It participates in mycotoxin biosynthesis. Functionally, 2-oxoglutarate-dependent dioxygenase; part of the gene cluster that mediates the biosynthesis of the mycotoxin citrinin, a hepato-nephrotoxic compound to humans due to inhibition of respiration complex III. The pathway begins with the synthesis of a keto-aldehyde intermediate by the citrinin PKS (pksCT) from successive condensations of 4 malonyl-CoA units, presumably with a simple acetyl-CoA starter unit. Release of the keto-aldehyde intermediate is consistent with the presence of the C-terminal reductive release domain. Mp11 collaborates with pksCT by catalyzing the hydrolysis of ACP-bound acyl intermediates to free the ACP from stalled intermediates. Mpl2 then catalyzes the oxidation of the C-12 methyl of the ketone intermediate to an alcohol intermediate which is further oxidized by the oxidoreductase mpl7 to produce a bisaldehyde intermediate. The fourth catalytic step is catalyzed by the mpl4 aldehyde dehydrogenase. The final transformation is the reduction of C-3 by mpl6 to provide the chemically stable citrinin nucleus. The chain is 2-oxoglutarate-dependent dioxygenase mpl2 from Monascus purpureus (Red mold).